A 320-amino-acid chain; its full sequence is Porphobilinogen deaminase (320 aa).

Cys-248 is modified (S-(dipyrrolylmethanemethyl)cysteine).

This sequence belongs to the HMBS family. Monomer. Dipyrromethane is required as a cofactor.

The enzyme catalyses 4 porphobilinogen + H2O = hydroxymethylbilane + 4 NH4(+). Its pathway is porphyrin-containing compound metabolism; protoporphyrin-IX biosynthesis; coproporphyrinogen-III from 5-aminolevulinate: step 2/4. It functions in the pathway porphyrin-containing compound metabolism; chlorophyll biosynthesis. Its function is as follows. Tetrapolymerization of the monopyrrole PBG into the hydroxymethylbilane pre-uroporphyrinogen in several discrete steps. This Synechococcus elongatus (strain ATCC 33912 / PCC 7942 / FACHB-805) (Anacystis nidulans R2) protein is Porphobilinogen deaminase.